We begin with the raw amino-acid sequence, 404 residues long: Caspase b (404 aa).

The propeptide occupies methionine 1–glutamine 171. A Pyrin domain is found at leucine 8–alanine 80. Active-site residues include histidine 249 and cysteine 296. Positions serine 301 to tryptophan 316 are excised as a propeptide.

The protein belongs to the peptidase C14A family. Upon direct LPS-binding, forms large homooligomers, resulting in its activation. These oligomers are often referred to as 'non-canonical inflammasomes'. Heterotetramer that consists of two anti-parallel arranged heterodimers, each one formed by a 20 kDa (p20) and a 10 kDa (p10) subunit. Interacts with caspa. Interacts with pycard; the interaction only occurs in the presence of nlrp1. Component of NLRP1 inflammasomes. Inflammasomes are supramolecular complexes that assemble in the cytosol in response to pathogens and other damage-associated signals and play critical roles in innate immunity and inflammation. The NLRP1 inflammasome is composed of the signal sensor nlrp1, and the adapter pycard (asc), which recruit effector pro-inflammatory caspases caspa and/or caspb. The interaction between nlrp1 and pycard is required for the sequential recruitment of caspa and then caspb. Caspa is preferentially recruited first and this causes the cleavage of pro-il1b into the midformed il1b. This is followed by the recruitment of caspb, which is activated and cleaves the midformed il1b resulting in il1b maturation. Post-translationally, the two subunits are derived from the precursor sequence by an autocatalytic mechanism. As to expression, expressed in the spleen, kidney and liver, and highly expressed in the gills and gut.

It localises to the inflammasome. Its subcellular location is the cytoplasm. It catalyses the reaction Strict requirement for Asp at the P1 position. It has a preferred cleavage sequence of Tyr-Val-Ala-Asp-|- but also cleaves at Asp-Glu-Val-Asp-|-.. Its activity is regulated as follows. Activated by homooligomerization induced by direct binding to cytosolic LPS. In terms of biological role, thiol protease which cleaves IL-1 beta (il1b), releasing the mature cytokine which is involved in a variety of inflammatory processes, and mediates apoptosis. Component of the NLRP1 inflammasome, which plays a crucial role in innate immunity and inflammation. In response to pathogens and other damage-associated signals, recruited to the NLRP1 inflammasome in its precursor form following the recruitment of caspase caspa. Its subsequent activation causes the cleavage of the midformed pro-il1b and results in il1b maturation and secretion in the extracellular milieu. Activated by direct binding to bacterial lipopolysaccharides (LPS), which causes non-canonical inflammasome activation and results in the pyroptosis of infected cells and their extrusion into the gut lumen, as well as in cytokine secretion. Plays a crucial role in the restriction of bacterial infection to intestinal sites. Pyroptosis limits bacterial replication, while cytokine secretion promotes the recruitment and activation of immune cells and triggers mucosal inflammation. Promotes pyroptosis by bacterial infection by E.piscicida. This chain is Caspase b, found in Danio rerio (Zebrafish).